A 470-amino-acid polypeptide reads, in one-letter code: MHFSIPETESRSGDSGGSAYVAYNIHVNGVLHCRVRYSQLLGLHEQLRKEYGANVVPAFPPKKLFSLTPAEVEQRREQLEKYMQAVRQDPLLGSSETFNSFLRRAQQETQQVPTEEVSLEVLLSNGQKVLVTVLTSDQTEDVLEAVAAKLDLPDDLIGYFSLFLVREKEDGAFSFVRKLQEFELPYVSVTSLRSQEYKIVLRKSYWDSAYDDDVMENRVGLNLLYAQTVSDIEHGWILVTKEQHRQLKSLQEKVSKKEFLRLAQTLRHYGYLRFDACVADFPEKDCPVVVSAGNSELSLQLRLPGQQLREGSFRVTRMRCWRVTSSVPLPSGGTSSPSRGRGEVRLELAFEYLMSKDRLQWVTITSPQAIMMSICLQSMVDELMVKKSGGSIRKMLRRRVGGTLRRSDSQQAVKSPPLLESPDASRESMVKLSSKLSAVSLRGIGSPSTDASASAVHGNFAFEGIGDEDL.

The PX domain occupies 1–109 (MHFSIPETES…SFLRRAQQET (109 aa)). A 1,2-diacyl-sn-glycero-3-phospho-(1D-myo-inositol-3-phosphate) is bound by residues arginine 36, serine 38, lysine 62, and arginine 75. One can recognise a Ras-associating domain in the interval 115–206 (EEVSLEVLLS…YKIVLRKSYW (92 aa)). The segment at 115–432 (EEVSLEVLLS…DASRESMVKL (318 aa)) is FERM-like. Residues 270 to 432 (GYLRFDACVA…DASRESMVKL (163 aa)) are PTB-like F3 module. A phosphoserine mark is found at serine 336, serine 407, serine 409, serine 415, serine 421, serine 437, and serine 440. Positions 401-426 (GGTLRRSDSQQAVKSPPLLESPDASR) are disordered.

Belongs to the sorting nexin family. In terms of assembly, monomer. Interacts with APP (via cytoplasmic YXNPXY motif). Interacts with KIF1B. Interacts with the C-termini of P-selectin, PTC, LDLR, VLDLR, LRP1 and LRP8. Interacts with KRIT1 (via N-terminus). Interacts with HRAS. Interacts with ITGB1 and ITGB5 (via NPxY motif). Interacts with CCDC22 and CCDC93; the interaction associates SNX17 with the CCC complex. Interacts (via C-terminus) with VPS26C and VPS35L; the interactions are direct and associate SNX17 with the retriever complex. In terms of tissue distribution, detected in brain neurons (at protein level). Broadly expressed, with highest levels in brain and placenta, and lowest levels in colon, intestine and liver.

It is found in the cytoplasm. The protein localises to the early endosome. The protein resides in the cytoplasmic vesicle membrane. Functionally, critical regulator of endosomal recycling of numerous surface proteins, including integrins, signaling receptor and channels. Binds to NPxY sequences in the cytoplasmic tails of target cargos. Associates with retriever and CCC complexes to prevent lysosomal degradation and promote cell surface recycling of numerous cargos such as integrins ITGB1, ITGB5 and their associated alpha subunits. Also required for maintenance of normal cell surface levels of APP and LRP1. Interacts with membranes containing phosphatidylinositol 3-phosphate (PtdIns(3P)). In Mus musculus (Mouse), this protein is Sorting nexin-17 (Snx17).